A 303-amino-acid chain; its full sequence is Energy-coupling factor transporter ATP-binding protein EcfA2 (303 aa).

An ABC transporter domain is found at 17-260; sequence LSVSNLSCFF…EAFLAHTTII (244 aa). ATP is bound at residue 54-61; sequence GDSGSGKS.

It belongs to the ABC transporter superfamily. Energy-coupling factor EcfA family. Forms a stable energy-coupling factor (ECF) transporter complex composed of 2 membrane-embedded substrate-binding proteins (S component), 2 ATP-binding proteins (A component) and 2 transmembrane proteins (T component).

Its subcellular location is the cell membrane. In terms of biological role, ATP-binding (A) component of a common energy-coupling factor (ECF) ABC-transporter complex. Unlike classic ABC transporters this ECF transporter provides the energy necessary to transport a number of different substrates. The chain is Energy-coupling factor transporter ATP-binding protein EcfA2 from Mycoplasma pneumoniae (strain ATCC 29342 / M129 / Subtype 1) (Mycoplasmoides pneumoniae).